The primary structure comprises 90 residues: Small ribosomal subunit protein bS20 (90 aa).

The segment at 1-21 (MANHKSALKRVRQTKKRTERN) is disordered.

The protein belongs to the bacterial ribosomal protein bS20 family.

In terms of biological role, binds directly to 16S ribosomal RNA. The protein is Small ribosomal subunit protein bS20 of Nitratiruptor sp. (strain SB155-2).